A 308-amino-acid chain; its full sequence is MTNGFTRLTEQFLIHIGVERGLATATVTAYESDIAKYIDWLETRGIHEPDAITKQDVEDYIAALDQAGESARSKARRLASIHEFHRFALGQHAVTADVSAAVKAPKGASTLPDVLTVDEVTRLLDAAAVGGSTDPVVLRDKALLEFMYATGCRVSEATGANLDDIDLDEHIARLMGKGSKQRLVPLGSYACRAITAYLNAGRGELEQRSSAKIPERRALFLNKRGKRISRQSVWEIVKATGERAGITKPLHPHTLRHSFATHLIQGGADVRTVQELLGHASVTTTQIYTHVSPETLIETYLTSHPRAR.

The Core-binding (CB) domain maps to 3–89 (NGFTRLTEQF…SIHEFHRFAL (87 aa)). The Tyr recombinase domain maps to 110 to 301 (TLPDVLTVDE…SPETLIETYL (192 aa)). Catalysis depends on residues Arg-153, Lys-177, His-253, Arg-256, and His-279. Tyr-288 functions as the O-(3'-phospho-DNA)-tyrosine intermediate in the catalytic mechanism.

Belongs to the 'phage' integrase family. XerD subfamily. As to quaternary structure, forms a cyclic heterotetrameric complex composed of two molecules of XerC and two molecules of XerD.

It localises to the cytoplasm. Site-specific tyrosine recombinase, which acts by catalyzing the cutting and rejoining of the recombining DNA molecules. The XerC-XerD complex is essential to convert dimers of the bacterial chromosome into monomers to permit their segregation at cell division. It also contributes to the segregational stability of plasmids. The sequence is that of Tyrosine recombinase XerD from Bifidobacterium longum (strain NCC 2705).